We begin with the raw amino-acid sequence, 520 residues long: Transactivator/viroplasmin protein (520 aa).

The tract at residues 486-520 (VQDASADSGPKDGPPPTRSIVEKEDVPTTSSKQVD) is disordered.

It belongs to the caulimoviridae viroplasmin family.

It localises to the host cytoplasm. In terms of biological role, enhances the ribosomal termination-reinitiation event leading to the translation of major open reading frames on the polycistronic viral RNAs. This Cauliflower mosaic virus (strain NY8153) (CaMV) protein is Transactivator/viroplasmin protein.